Here is a 250-residue protein sequence, read N- to C-terminus: 3-deoxy-manno-octulosonate cytidylyltransferase (250 aa).

Belongs to the KdsB family.

It localises to the cytoplasm. It catalyses the reaction 3-deoxy-alpha-D-manno-oct-2-ulosonate + CTP = CMP-3-deoxy-beta-D-manno-octulosonate + diphosphate. Its pathway is nucleotide-sugar biosynthesis; CMP-3-deoxy-D-manno-octulosonate biosynthesis; CMP-3-deoxy-D-manno-octulosonate from 3-deoxy-D-manno-octulosonate and CTP: step 1/1. It functions in the pathway bacterial outer membrane biogenesis; lipopolysaccharide biosynthesis. Activates KDO (a required 8-carbon sugar) for incorporation into bacterial lipopolysaccharide in Gram-negative bacteria. This is 3-deoxy-manno-octulosonate cytidylyltransferase from Rhizobium meliloti (strain 1021) (Ensifer meliloti).